The sequence spans 549 residues: Undecaprenyl phosphate-alpha-4-amino-4-deoxy-L-arabinose arabinosyl transferase (549 aa).

12 helical membrane-spanning segments follow: residues leucine 9–isoleucine 29, leucine 80–leucine 100, serine 112–alanine 132, proline 136–glycine 156, phenylalanine 176–leucine 196, leucine 204–leucine 224, proline 256–proline 276, glutamine 288–serine 308, leucine 312–valine 332, asparagine 346–leucine 366, phenylalanine 376–tryptophan 396, and alanine 402–proline 422.

This sequence belongs to the glycosyltransferase 83 family.

It is found in the cell inner membrane. The catalysed reaction is 4-amino-4-deoxy-alpha-L-arabinopyranosyl di-trans,octa-cis-undecaprenyl phosphate + lipid IVA = lipid IIA + di-trans,octa-cis-undecaprenyl phosphate.. It functions in the pathway lipopolysaccharide metabolism; 4-amino-4-deoxy-beta-L-arabinose-lipid A biosynthesis. Its function is as follows. Catalyzes the transfer of the L-Ara4N moiety of the glycolipid undecaprenyl phosphate-alpha-L-Ara4N to lipid A. The modified arabinose is attached to lipid A and is required for resistance to polymyxin and cationic antimicrobial peptides. This chain is Undecaprenyl phosphate-alpha-4-amino-4-deoxy-L-arabinose arabinosyl transferase, found in Pseudomonas paraeruginosa (strain DSM 24068 / PA7) (Pseudomonas aeruginosa (strain PA7)).